The primary structure comprises 670 residues: Solute carrier organic anion transporter family member 1A1 (670 aa).

Residues 1–20 (MEETEKKVATQEGRFFSKMK) are Cytoplasmic-facing. A helical transmembrane segment spans residues 21–40 (VFLMSLTCAYLAKSLSGVYM). Residues 41 to 59 (NSMLTQIERQFGIPTSVVG) lie on the Extracellular side of the membrane. Residues 60-80 (FITGSFEIGNLLLIVFVSYFG) traverse the membrane as a helical segment. At 81–86 (RKLHRP) the chain is on the cytoplasmic side. Residues 87–111 (IIIGVGCVVMGLGCFLMASPHFLMG) form a helical membrane-spanning segment. Topologically, residues 112 to 155 (RYKYETTISPTSNLSSNSFLCIENRTQTLKPTQDPTECVKEIKS) are extracellular. N-linked (GlcNAc...) asparagine glycans are attached at residues Asn124 and Asn135. Residues 156–184 (LMWIYVLIGNTMRGIGETPIMPLGISYIE) form a helical membrane-spanning segment. At 185–203 (DFAKSENSPLYIGILEMGK) the chain is on the cytoplasmic side. Residues 204 to 224 (IVGPIIGLLLGSFFARVYVDI) form a helical membrane-spanning segment. Residues 225–242 (GSVNTDDLTITPTDTRWV) are Extracellular-facing. The chain crosses the membrane as a helical span at residues 243-267 (GAWWIGFLVCAGVNILTSIPFFFFP). Residues 268–311 (KTLPKKELQDNVDVTKYEKVEKHRERAKKENLGITKDFLPFMKS) are Cytoplasmic-facing. Residues 312–333 (LCCNPIYMLFSLTSVLQINGFA) traverse the membrane as a helical segment. The Extracellular segment spans residues 334–353 (STFTFLPKYLEQQYGKSTSE). A helical membrane pass occupies residues 354-377 (AVFLIGVYSLPPVCLGYLISGFIM). Residues 378–381 (KKFK) are Cytoplasmic-facing. A helical membrane pass occupies residues 382-405 (ITVKKAAYIAFGLSLSEYFIFLCN). Residues 406–513 (YLLTCDNFPV…PECDNKLQYF (108 aa)) are Extracellular-facing. Residues 433–488 (KNVLADCNTRCSCLTDTWDPVCGDNGLAYMSACLAGCEKSVGTGTNMVFQNCSCIG) enclose the Kazal-like domain. 3 cysteine pairs are disulfide-bonded: Cys439-Cys469, Cys445-Cys465, and Cys454-Cys486. 2 N-linked (GlcNAc...) asparagine glycosylation sites follow: Asn483 and Asn492. The chain crosses the membrane as a helical span at residues 514-536 (LIKSVFSSFIFSLAAIPGYMVLL). Residues 537-545 (RCVKSEEKS) lie on the Cytoplasmic side of the membrane. A helical membrane pass occupies residues 546 to 571 (IGVGLHAFFIRLLAGIPAPVYFGALI). Over 572–605 (DRTCLHWGTLKCGQPGACRMYDINRFRHIYLGLP) the chain is Extracellular. A helical membrane pass occupies residues 606–623 (AAVRGSSFLPAVFILILM). Over 624-670 (RKFHFPGDIHSPDTELAEMKLTEKESECTDVCRSPKVENDGELKTKL) the chain is Cytoplasmic. Position 634 is a phosphoserine (Ser634).

Belongs to the organo anion transporter (TC 2.A.60) family. Binds to PDZK1. Interaction with PDZK1 is required for expression on hepatocyte surface. Highly expressed in liver, and at lower levels in kidney. Not detected in other tissues.

The protein localises to the basolateral cell membrane. The enzyme catalyses estrone 3-sulfate(out) + hydrogencarbonate(in) = estrone 3-sulfate(in) + hydrogencarbonate(out). It catalyses the reaction taurocholate(out) + hydrogencarbonate(in) = taurocholate(in) + hydrogencarbonate(out). The catalysed reaction is L-thyroxine(out) = L-thyroxine(in). It carries out the reaction prostaglandin E2(out) = prostaglandin E2(in). The enzyme catalyses 17beta-estradiol 17-O-(beta-D-glucuronate)(out) = 17beta-estradiol 17-O-(beta-D-glucuronate)(in). It catalyses the reaction dehydroepiandrosterone 3-sulfate(out) = dehydroepiandrosterone 3-sulfate(in). Functionally, mediates the Na(+)-independent transport of organic anions such as steroid sulfate conjugates (dehydroepiandrosterone sulfate (DHEAS), 17-beta-glucuronosyl estradiol, estrone-3-sulfate), conjugated (taurocholate) and unconjugated (cholate) bile acids, prostaglandin E2 (PGE2) and L-thyroxine T4. Also capable of transporting sulfobromophthalein (BSP), ouabain and gadoxetate. Hydrogencarbonate/HCO3(-) acts as the probable counteranion that exchanges for organic anions. Shows a pH-sensitive substrate specificity which may be ascribed to the protonation state of the binding site and leads to a stimulation of substrate transport in an acidic microenvironment. This chain is Solute carrier organic anion transporter family member 1A1, found in Mus musculus (Mouse).